The sequence spans 344 residues: Mitochondrial mRNA pseudouridine synthase Rpusd3 (344 aa).

Residues 1–36 (MGALRVLRYVSMIWRPELGSCARQRDAGFGTEARRP) constitute a mitochondrion transit peptide. The segment at 25–53 (RDAGFGTEARRPSQPHRSSKHKDLVEDQP) is disordered.

Belongs to the pseudouridine synthase RluA family. As to quaternary structure, forms a regulatory protein-RNA complex, consisting of RCC1L, NGRN, RPUSD3, RPUSD4, TRUB2, FASTKD2 and 16S mt-rRNA.

The protein resides in the mitochondrion matrix. It catalyses the reaction a uridine in mRNA = a pseudouridine in mRNA. Functionally, catalyzes uridine to pseudouridine isomerization (pseudouridylation) of specific mitochondrial mRNAs (mt-mRNAs), a post-transcriptional modification necessary for their translation. Acts at position 390 in COXI mt-mRNA and at position 697-699 in mitochondrial COXIII mt-mRNA. As a component of a functional protein-RNA module, consisting of RCC1L, NGRN, RPUSD3, RPUSD4, TRUB2, FASTKD2 and 16S mitochondrial ribosomal RNA (16S mt-rRNA), controls 16S mt-rRNA abundance and may play a role in mitochondrial ribosome biogenesis. In Mus musculus (Mouse), this protein is Mitochondrial mRNA pseudouridine synthase Rpusd3 (Rpusd3).